Reading from the N-terminus, the 1034-residue chain is Protein ITPRID1 (1034 aa).

Disordered stretches follow at residues 223-290 (KTQQ…PTKP), 442-486 (QVSS…KSMT), and 624-678 (QSSL…SSWS). Composition is skewed to polar residues over residues 443 to 453 (VSSMTGSQSPT) and 465 to 476 (HSPASQQDSLQE). Residues 477–486 (SYGSKSKSMT) are compositionally biased toward low complexity. Residues 669-678 (TDSNAASSWS) are compositionally biased toward polar residues. Residues 843–902 (EMETMKMVCQSFREHLEEIEQHFMGQQALYPRDMSEEEREEAEYLRTLREALRQQVAELA) are a coiled coil.

The sequence is that of Protein ITPRID1 (Itprid1) from Mus musculus (Mouse).